Here is a 270-residue protein sequence, read N- to C-terminus: Putative phosphoenolpyruvate synthase regulatory protein (270 aa).

Gly150–Thr157 lines the ADP pocket.

The protein belongs to the pyruvate, phosphate/water dikinase regulatory protein family. PSRP subfamily.

The catalysed reaction is [pyruvate, water dikinase] + ADP = [pyruvate, water dikinase]-phosphate + AMP + H(+). The enzyme catalyses [pyruvate, water dikinase]-phosphate + phosphate + H(+) = [pyruvate, water dikinase] + diphosphate. Functionally, bifunctional serine/threonine kinase and phosphorylase involved in the regulation of the phosphoenolpyruvate synthase (PEPS) by catalyzing its phosphorylation/dephosphorylation. The polypeptide is Putative phosphoenolpyruvate synthase regulatory protein (Shewanella frigidimarina (strain NCIMB 400)).